The sequence spans 361 residues: MSRIQRCFKSLASAGFFRTVEDNKLELLSHGREYAKLLQQHWTRLRPLAAHLGATKEPINPVNIQRFSFPQSQQFRNNFQKLVKDHPRKAKCPTLLKHQSTCSGPTSNSLFGIKGPTLHLTTDFLVEPHRALEHFYNMQRESKIWWMRLSSNPSRYRIVPCDLAEDLNPNDYQAIDIRTSYGDAGEVTVEQLSLVRIVDDKDFRLPDARTGEIVQPTVIRSVIELETTTCALLLDGCDHGRDSQSLLLHRVLAPYQCGIACVESDSELSADLSDLCQHLKHVLNHAGLRLSEGDGIRTTKNASHLAEHLLETDMLGIPYTLVINEQTLRNGLMQLRSRDTRLAETIHISDVPDYLLNIFKN.

The transit peptide at 1-18 directs the protein to the mitochondrion; it reads MSRIQRCFKSLASAGFFR.

In terms of assembly, component of the DNA polymerase gamma complex consisting of two subunits: the catalytic subunit DNApol-gamma/DNApolG1 and the accessory subunit PolG2/DNApol-gamma35. In terms of tissue distribution, expressed in ovaries (at protein level).

It is found in the mitochondrion. As accessory component of the DNA polymerase gamma complex is involved in the replication of mitochondrial DNA. Does not bind DNA. Essential for mitochondrial DNA maintenance and larval development. In Drosophila melanogaster (Fruit fly), this protein is DNA polymerase subunit gamma-2, mitochondrial.